Reading from the N-terminus, the 133-residue chain is Membrane protein FAM174B (133 aa).

Residues methionine 1–glycine 19 form the signal peptide. Topologically, residues glutamate 20–asparagine 67 are extracellular. The interval histidine 22–threonine 47 is disordered. Residues asparagine 32, asparagine 45, and asparagine 67 are each glycosylated (N-linked (GlcNAc...) asparagine). The helical transmembrane segment at isoleucine 68–cysteine 88 threads the bilayer. The Cytoplasmic segment spans residues arginine 89 to arginine 133. The disordered stretch occupies residues alanine 113–arginine 133. Acidic residues predominate over residues glutamate 117–threonine 126.

This sequence belongs to the FAM174 family.

Its subcellular location is the cell membrane. It localises to the golgi apparatus. Its function is as follows. Essential for Golgi structural integrity. The sequence is that of Membrane protein FAM174B (Fam174b) from Danio rerio (Zebrafish).